A 467-amino-acid polypeptide reads, in one-letter code: 3-isopropylmalate dehydratase large subunit (467 aa).

[4Fe-4S] cluster is bound by residues C347, C407, and C410.

This sequence belongs to the aconitase/IPM isomerase family. LeuC type 1 subfamily. Heterodimer of LeuC and LeuD. [4Fe-4S] cluster serves as cofactor.

The enzyme catalyses (2R,3S)-3-isopropylmalate = (2S)-2-isopropylmalate. The protein operates within amino-acid biosynthesis; L-leucine biosynthesis; L-leucine from 3-methyl-2-oxobutanoate: step 2/4. Its function is as follows. Catalyzes the isomerization between 2-isopropylmalate and 3-isopropylmalate, via the formation of 2-isopropylmaleate. The chain is 3-isopropylmalate dehydratase large subunit from Crocosphaera subtropica (strain ATCC 51142 / BH68) (Cyanothece sp. (strain ATCC 51142)).